A 298-amino-acid chain; its full sequence is Mimecan (298 aa).

The signal sequence occupies residues 1–19; sequence METVHSTFLLLLFVPLTQQ. Residue Asn88 is glycosylated (N-linked (GlcNAc...) (keratan sulfate) asparagine). LRR repeat units follow at residues 112–131, 132–155, 156–179, 180–199, 200–225, 226–246, and 247–277; these read DAVP…FNKI, KKLT…GNLI, EDIE…ENQL, LRLP…HNKI, KSKG…HNDL, ESVP…FNSI, and SSLT…GNPI. Cys255 and Cys288 are oxidised to a cystine. Residue Asn258 is glycosylated (N-linked (GlcNAc...) (keratan sulfate) asparagine).

The protein belongs to the small leucine-rich proteoglycan (SLRP) family. SLRP class III subfamily. Contains keratan sulfate.

Its subcellular location is the secreted. It localises to the extracellular space. It is found in the extracellular matrix. In terms of biological role, induces bone formation in conjunction with TGF-beta-1 or TGF-beta-2. This Mus musculus (Mouse) protein is Mimecan (Ogn).